The primary structure comprises 326 residues: Porin-like protein H (326 aa).

An N-terminal signal peptide occupies residues 1-19 (MKKTLVALAILTAAGSANA).

The protein belongs to the Gram-negative porin family. In terms of assembly, oligomer.

It localises to the cell outer membrane. Forms pores that allow passive diffusion of small molecules across the outer membrane. The chain is Porin-like protein H (ompH) from Photobacterium profundum (strain SS9).